We begin with the raw amino-acid sequence, 747 residues long: AMP deaminase 1 (747 aa).

The residue at position 81 (T81) is a Phosphothreonine. At S85 the chain carries Phosphoserine. Y216 carries the phosphotyrosine modification. H303 and H305 together coordinate Zn(2+). Substrate is bound by residues H305 and 374-379 (KFNDKY). Residue S441 is modified to Phosphoserine. A Zn(2+)-binding site is contributed by H572. E575 contributes to the substrate binding site. The Proton acceptor role is filled by H594. D649 is a binding site for Zn(2+). 650-653 (DPMQ) serves as a coordination point for substrate.

This sequence belongs to the metallo-dependent hydrolases superfamily. Adenosine and AMP deaminases family. In terms of assembly, homotetramer. It depends on Zn(2+) as a cofactor.

The catalysed reaction is AMP + H2O + H(+) = IMP + NH4(+). It functions in the pathway purine metabolism; IMP biosynthesis via salvage pathway; IMP from AMP: step 1/1. Its function is as follows. AMP deaminase plays a critical role in energy metabolism. The protein is AMP deaminase 1 of Homo sapiens (Human).